The primary structure comprises 146 residues: MIF-like protein mif-3 (146 aa).

Belongs to the MIF family.

In Caenorhabditis elegans, this protein is MIF-like protein mif-3 (mif-3).